Consider the following 370-residue polypeptide: MHFESPIKRRRSRQIMVGAVPVGGDAPIAVQSMTNTETCDVDATVAQIETLQQAGADIVRVSVPTMDAAEAFAAIKQRVTLPLVADIHFDYKIALRVAEVGVDCLRINPGNIGREDRVQAVISAAKDKGIPIRIGVNAGSLEKDLQKKYGEPTPEALVESAMRHIDILDRHDFQNFKVSLKASDVFMTVAAYRQIADQIEQPLHLGITEAGGFRSGAVKSAIGLGMLLMDGIGDTIRVSLAADPVEEIRVGYDILKSLKLRSKGINFIACPSCSRQNFDVIKTMNELERRLEDINTPLDVAVIGCVVNGPGEAKEADVGLTGGSPSNLIYVGGKPDHKLNNDELVERFESLIRSKAAAKQEELDALIAKG.

Residues Cys270, Cys273, Cys305, and Glu312 each contribute to the [4Fe-4S] cluster site.

It belongs to the IspG family. It depends on [4Fe-4S] cluster as a cofactor.

It catalyses the reaction (2E)-4-hydroxy-3-methylbut-2-enyl diphosphate + oxidized [flavodoxin] + H2O + 2 H(+) = 2-C-methyl-D-erythritol 2,4-cyclic diphosphate + reduced [flavodoxin]. The protein operates within isoprenoid biosynthesis; isopentenyl diphosphate biosynthesis via DXP pathway; isopentenyl diphosphate from 1-deoxy-D-xylulose 5-phosphate: step 5/6. Converts 2C-methyl-D-erythritol 2,4-cyclodiphosphate (ME-2,4cPP) into 1-hydroxy-2-methyl-2-(E)-butenyl 4-diphosphate. This Hahella chejuensis (strain KCTC 2396) protein is 4-hydroxy-3-methylbut-2-en-1-yl diphosphate synthase (flavodoxin).